The sequence spans 281 residues: NAD-dependent protein deacetylase 1 (281 aa).

The Deacetylase sirtuin-type domain occupies 1–281 (MEEGAALEGV…FDQILDALDL (281 aa)). Residues 24 to 44 (GAGV…GSLN) and 102 to 105 (QNVD) contribute to the NAD(+) site. His-120 functions as the Proton acceptor in the catalytic mechanism. Residues Cys-128, Cys-131, Cys-183, and Cys-186 each contribute to the Zn(2+) site. Residues 224-226 (GSS), 250-252 (NGG), and Val-268 contribute to the NAD(+) site.

Belongs to the sirtuin family. Class II subfamily. The cofactor is Zn(2+).

It localises to the cytoplasm. It carries out the reaction N(6)-acetyl-L-lysyl-[protein] + NAD(+) + H2O = 2''-O-acetyl-ADP-D-ribose + nicotinamide + L-lysyl-[protein]. In terms of biological role, NAD-dependent protein deacetylase which modulates the activities of several enzymes which are inactive in their acetylated form. The chain is NAD-dependent protein deacetylase 1 from Corynebacterium efficiens (strain DSM 44549 / YS-314 / AJ 12310 / JCM 11189 / NBRC 100395).